Consider the following 38-residue polypeptide: RapG inhibitor (38 aa).

Positions 1–33 (MKRFLIGAGVAAVILSGWFIADHQTHSQEMKVA) are excised as a propeptide.

It belongs to the Phr family. In terms of processing, contains a predicted signal peptide cleavage site in the N-terminal region, however the propeptide is probably subject to only one processing event, at the N-terminal end of the mature peptide.

The protein resides in the secreted. It is found in the cytoplasm. Functionally, signaling molecule involved in the regulation of expression of DegU-controlled genes. Secreted during production, but the mature peptide acts intracellularly, indicating that it needs to be imported into the cell to function. Stimulates the DegU-dependent expression of aprE, an extracellular alkaline protease. Acts by inhibiting RapG activity. At high concentrations, represses the DegS-dependent aprE expression. This chain is RapG inhibitor (phrG), found in Bacillus subtilis (strain 168).